The sequence spans 374 residues: Phosphate acyltransferase (374 aa).

It belongs to the PlsX family. In terms of assembly, homodimer. Probably interacts with PlsY.

It localises to the cytoplasm. The enzyme catalyses a fatty acyl-[ACP] + phosphate = an acyl phosphate + holo-[ACP]. It functions in the pathway lipid metabolism; phospholipid metabolism. Functionally, catalyzes the reversible formation of acyl-phosphate (acyl-PO(4)) from acyl-[acyl-carrier-protein] (acyl-ACP). This enzyme utilizes acyl-ACP as fatty acyl donor, but not acyl-CoA. This is Phosphate acyltransferase from Gluconacetobacter diazotrophicus (strain ATCC 49037 / DSM 5601 / CCUG 37298 / CIP 103539 / LMG 7603 / PAl5).